A 431-amino-acid polypeptide reads, in one-letter code: Galanin-like G-protein coupled receptor npr-9 (431 aa).

Over 1–34 (MEFENLTKEEMEQLQKIYDDTISFERKIGIIIPT) the chain is Extracellular. An N-linked (GlcNAc...) asparagine glycan is attached at Asn-5. A helical membrane pass occupies residues 35–55 (IFAVIILVGLVGNALVVIVAF). At 56–66 (GRQMRNSTNTL) the chain is on the cytoplasmic side. Residues 67–87 (IIGLAISDLMFLLLCVPFTAV) form a helical membrane-spanning segment. At 88–101 (DYAAPTWIFPEWTC) the chain is on the extracellular side. Cys-101 and Cys-182 form a disulfide bridge. The helical transmembrane segment at 102-124 (SMINFFQHTSAYCSVWTLTLMAL) threads the bilayer. Residues 125 to 143 (DRYLAVVYPVESMTLRTPR) lie on the Cytoplasmic side of the membrane. The chain crosses the membrane as a helical span at residues 144-164 (NTVIALCFIYIIIIASQIPVG). Residues 165–203 (RMHGIYVYDFIMEKRSTCAILTIATAEATPTMARTYFMT) lie on the Extracellular side of the membrane. A helical membrane pass occupies residues 204–224 (FNVFGYVLPLGISVVLYGLML). The Cytoplasmic segment spans residues 225 to 268 (RKLWDMPRPGNSQSVGGRNLTNRDSGSSIRRRPEATAAKRKVTR). The segment covering 235–252 (NSQSVGGRNLTNRDSGSS) has biased composition (polar residues). The interval 235–257 (NSQSVGGRNLTNRDSGSSIRRRP) is disordered. The helical transmembrane segment at 269-289 (LVLCVLITWALCWLPLNVCFF) threads the bilayer. Topologically, residues 290-298 (MSGLAYPEP) are extracellular. A helical transmembrane segment spans residues 299-319 (LVISHGVIMVIVQIASQVLAY). Over 320–431 (TNSCLNPILY…RSKSTRSYNL (112 aa)) the chain is Cytoplasmic. Positions 393–414 (SLLKDNSSSATSVQPLRTSIQA) are enriched in polar residues. The interval 393–431 (SLLKDNSSSATSVQPLRTSIQAKKTKNIGRSKSTRSYNL) is disordered. Basic residues predominate over residues 415–425 (KKTKNIGRSKS).

Belongs to the G-protein coupled receptor 1 family. Exclusively expressed in the AIB interneuron.

The protein resides in the cell membrane. Neuropeptide that controls movement such as roaming, foraging and backwards locomotion or 'reversals' in response to environmental cues such as food availability or volatile odorants such as octanol. Antagonizes AIB interneuron activity to control bacterial colonization and may negatively regulate the expression of immunity-related genes such as pqm-1 and dod-22 in response to infection by P.aeruginosa. The sequence is that of Galanin-like G-protein coupled receptor npr-9 from Caenorhabditis elegans.